Here is a 367-residue protein sequence, read N- to C-terminus: Molybdopterin synthase catalytic subunit (367 aa).

Substrate contacts are provided by residues 101-102 (HR), Lys-117, and 124-126 (KKE).

This sequence belongs to the MoaE family. MOCS2B subfamily. As to quaternary structure, heterotetramer; composed of 2 small (Mocs2A) and 2 large (Mocs2B) subunits.

The protein resides in the cytoplasm. The catalysed reaction is 2 [molybdopterin-synthase sulfur-carrier protein]-C-terminal-Gly-aminoethanethioate + cyclic pyranopterin phosphate + H2O = molybdopterin + 2 [molybdopterin-synthase sulfur-carrier protein]-C-terminal Gly-Gly + 2 H(+). It functions in the pathway cofactor biosynthesis; molybdopterin biosynthesis. In terms of biological role, catalytic subunit of the molybdopterin synthase complex, a complex that catalyzes the conversion of precursor Z into molybdopterin. Acts by mediating the incorporation of 2 sulfur atoms from thiocarboxylated Mocs2A into precursor Z to generate a dithiolene group. This is Molybdopterin synthase catalytic subunit from Drosophila erecta (Fruit fly).